An 89-amino-acid chain; its full sequence is UPF0367 protein MAE_19160 (89 aa).

The protein belongs to the UPF0367 family.

The sequence is that of UPF0367 protein MAE_19160 from Microcystis aeruginosa (strain NIES-843 / IAM M-2473).